A 246-amino-acid polypeptide reads, in one-letter code: Small ribosomal subunit protein uS2 (246 aa).

A disordered region spans residues 225 to 246 (SKSSASVPNKDEYVAAEDGAAE).

Belongs to the universal ribosomal protein uS2 family.

This is Small ribosomal subunit protein uS2 from Cellvibrio japonicus (strain Ueda107) (Pseudomonas fluorescens subsp. cellulosa).